The following is a 270-amino-acid chain: Urease accessory protein UreD (270 aa).

It belongs to the UreD family. UreD, UreF and UreG form a complex that acts as a GTP-hydrolysis-dependent molecular chaperone, activating the urease apoprotein by helping to assemble the nickel containing metallocenter of UreC. The complex may form in the order UreABCD, UreABCDF, UreABCDFG. The UreE protein probably delivers the nickel in a GTPase-dependent fashion.

Its subcellular location is the cytoplasm. Its function is as follows. Necessary for the functional incorporation of the urease nickel metallocenter. The polypeptide is Urease accessory protein UreD (Klebsiella aerogenes (Enterobacter aerogenes)).